Here is a 372-residue protein sequence, read N- to C-terminus: MSKAFGLLRQICQSILAESSQSPADLEEKKEEDSNMKREQPRERPRAWDYPHGLVGLHNIGQTCCLNSLIQVFVMNVDFTRILKRITVPRGADEQRRSVPFQMLLLLEKMQDSRQKAVRPLELAYCLQKCNVPLFVQHDAAQLYLKLWNLIKDQITDVHLVERLQALYTIRVKDSLICVDCAMESSRNSSMLTLPLSLFDVDSKPLKTLEDALHCFFQPRELSSKSKCFCENCGKKTRGKQVLKLTHLPQTLTIHLMRFSIRNSQTRKICHSLYFPQSLDFSQILPMKRESCDAEEQSGGQYELFAVIAHVGMADSGHYCVYIRNAVDGKWFCFNDSNICLVSWEDIQCTYGNPNYHWQETAYLLVYMKMEC.

A disordered region spans residues 19–45; sequence SSQSPADLEEKKEEDSNMKREQPRERP. Residues 26-45 are compositionally biased toward basic and acidic residues; the sequence is LEEKKEEDSNMKREQPRERP. Positions 36–51 are mediates interaction with IFNAR2; it reads MKREQPRERPRAWDYP. A mediates interaction with STAT2 region spans residues 51 to 112; that stretch reads PHGLVGLHNI…MLLLLEKMQD (62 aa). Residues 55-370 form the USP domain; the sequence is VGLHNIGQTC…TAYLLVYMKM (316 aa). The Nucleophile role is filled by Cys-64. A mediates interaction with STAT2 and necessary for the negative regulation of the type I IFN signaling pathway region spans residues 303–312; it reads ELFAVIAHVG. The tract at residues 313–372 is mediates interaction with IFNAR2; it reads MADSGHYCVYIRNAVDGKWFCFNDSNICLVSWEDIQCTYGNPNYHWQETAYLLVYMKMEC. His-318 (proton acceptor) is an active-site residue.

Belongs to the peptidase C19 family. As to quaternary structure, interacts with STAT2; the interaction is direct. Interacts with IFNAR2; indirectly via STAT2, it negatively regulates the assembly of the ternary interferon-IFNAR1-IFNAR2 complex and inhibits type I interferon signaling. Interacts with STING1. Interacts with USP20.

The protein resides in the cytoplasm. It is found in the nucleus. The catalysed reaction is Thiol-dependent hydrolysis of ester, thioester, amide, peptide and isopeptide bonds formed by the C-terminal Gly of ubiquitin (a 76-residue protein attached to proteins as an intracellular targeting signal).. Its function is as follows. Interferon-induced ISG15-specific protease that plays a crucial role for maintaining a proper balance of ISG15-conjugated proteins in cells. Regulates protein ISGylation by efficiently cleaving ISG15 conjugates linked via isopeptide bonds. Regulates T-cell activation and T-helper 17 (Th17) cell differentiation by deubiquitinating TAK1, likely to keep TAK1-TAB complexes in steady conditions. In turn, restricts activation of NF-kappa-B, NFAT, and JNK as well as expression of IL2 in T-cells after TCR activation. Acts as a molecular adapter with USP20 to promote innate antiviral response through deubiquitinating STING1. Involved also in the negative regulation of the inflammatory response triggered by type I interferon. Upon recruitment by STAT2 to the type I interferon receptor subunit IFNAR2 interferes with the assembly of the ternary interferon-IFNAR1-IFNAR2 complex and acts as a negative regulator of the type I interferon signaling pathway. Has enzymatic activity similar to isoform 1 and interferes with type I interferon signaling. Major deISGylation enzyme for nuclear proteins. The protein is Ubl carboxyl-terminal hydrolase 18 (USP18) of Homo sapiens (Human).